A 157-amino-acid chain; its full sequence is Phosphopantetheine adenylyltransferase (157 aa).

Ser-8 contacts substrate. Residues 8–9 and His-16 contribute to the ATP site; that span reads SF. The substrate site is built by Lys-40, Leu-72, and Arg-86. Residues 87–89, Glu-97, and 121–127 each bind ATP; these read GLR and FGTISSS.

It belongs to the bacterial CoaD family. As to quaternary structure, homohexamer. Requires Mg(2+) as cofactor.

Its subcellular location is the cytoplasm. It catalyses the reaction (R)-4'-phosphopantetheine + ATP + H(+) = 3'-dephospho-CoA + diphosphate. It functions in the pathway cofactor biosynthesis; coenzyme A biosynthesis; CoA from (R)-pantothenate: step 4/5. Functionally, reversibly transfers an adenylyl group from ATP to 4'-phosphopantetheine, yielding dephospho-CoA (dPCoA) and pyrophosphate. The polypeptide is Phosphopantetheine adenylyltransferase (Cutibacterium acnes (strain DSM 16379 / KPA171202) (Propionibacterium acnes)).